The chain runs to 426 residues: Glutamate-1-semialdehyde 2,1-aminomutase (426 aa).

Lys-265 is modified (N6-(pyridoxal phosphate)lysine).

The protein belongs to the class-III pyridoxal-phosphate-dependent aminotransferase family. HemL subfamily. Homodimer. Pyridoxal 5'-phosphate is required as a cofactor.

The protein localises to the cytoplasm. The enzyme catalyses (S)-4-amino-5-oxopentanoate = 5-aminolevulinate. The protein operates within porphyrin-containing compound metabolism; protoporphyrin-IX biosynthesis; 5-aminolevulinate from L-glutamyl-tRNA(Glu): step 2/2. The polypeptide is Glutamate-1-semialdehyde 2,1-aminomutase (Salmonella enteritidis PT4 (strain P125109)).